The sequence spans 312 residues: Beta-lactamase regulatory protein BlaB (312 aa).

The polypeptide is Beta-lactamase regulatory protein BlaB (blaB) (Streptomyces cacaoi).